Consider the following 825-residue polypeptide: IQ and AAA domain-containing protein 1-like (825 aa).

The region spanning 206–235 (RDQGAIVIQKVWKGYLQRKRIEQDRRVEME) is the IQ domain. The segment covering 344 to 366 (QAQESRKKDQEKKEKNKEKEKEK) has biased composition (basic and acidic residues). Disordered stretches follow at residues 344–378 (QAQE…KEEK) and 459–487 (DREE…KDLT). A compositionally biased stretch (basic residues) spans 467-482 (KSPKKKGGKKSGKKKK). 572 to 579 (GPSGMGKK) lines the ATP pocket.

The protein belongs to the AAA ATPase family.

This is IQ and AAA domain-containing protein 1-like (Iqca1l) from Mus musculus (Mouse).